An 89-amino-acid polypeptide reads, in one-letter code: Small ribosomal subunit protein uS15 (89 aa).

Belongs to the universal ribosomal protein uS15 family. As to quaternary structure, part of the 30S ribosomal subunit. Forms a bridge to the 50S subunit in the 70S ribosome, contacting the 23S rRNA.

One of the primary rRNA binding proteins, it binds directly to 16S rRNA where it helps nucleate assembly of the platform of the 30S subunit by binding and bridging several RNA helices of the 16S rRNA. In terms of biological role, forms an intersubunit bridge (bridge B4) with the 23S rRNA of the 50S subunit in the ribosome. The sequence is that of Small ribosomal subunit protein uS15 from Thermus thermophilus (strain ATCC BAA-163 / DSM 7039 / HB27).